A 455-amino-acid polypeptide reads, in one-letter code: Bifunctional protein GlmU (455 aa).

The pyrophosphorylase stretch occupies residues 1–226 (MGLSVVILAA…EFEILGVNDR (226 aa)). Residues 8–11 (LAAG), Lys-22, Gln-73, 78–79 (GT), 99–101 (YGD), Gly-136, Glu-151, Asn-166, and Asn-224 each bind UDP-N-acetyl-alpha-D-glucosamine. Position 101 (Asp-101) interacts with Mg(2+). Asn-224 serves as a coordination point for Mg(2+). The linker stretch occupies residues 227–247 (TQLASLERVWQRNVAEKIMAK). An N-acetyltransferase region spans residues 248–455 (GVSIADPNRF…WQRSVKKTDK (208 aa)). Residues Arg-330 and Lys-348 each coordinate UDP-N-acetyl-alpha-D-glucosamine. His-360 serves as the catalytic Proton acceptor. UDP-N-acetyl-alpha-D-glucosamine is bound by residues Tyr-363 and Asn-374. Residues Ala-377, 383-384 (NY), Ser-402, Ala-420, and Arg-437 contribute to the acetyl-CoA site.

It in the N-terminal section; belongs to the N-acetylglucosamine-1-phosphate uridyltransferase family. In the C-terminal section; belongs to the transferase hexapeptide repeat family. As to quaternary structure, homotrimer. Mg(2+) is required as a cofactor.

Its subcellular location is the cytoplasm. The enzyme catalyses alpha-D-glucosamine 1-phosphate + acetyl-CoA = N-acetyl-alpha-D-glucosamine 1-phosphate + CoA + H(+). The catalysed reaction is N-acetyl-alpha-D-glucosamine 1-phosphate + UTP + H(+) = UDP-N-acetyl-alpha-D-glucosamine + diphosphate. It participates in nucleotide-sugar biosynthesis; UDP-N-acetyl-alpha-D-glucosamine biosynthesis; N-acetyl-alpha-D-glucosamine 1-phosphate from alpha-D-glucosamine 6-phosphate (route II): step 2/2. It functions in the pathway nucleotide-sugar biosynthesis; UDP-N-acetyl-alpha-D-glucosamine biosynthesis; UDP-N-acetyl-alpha-D-glucosamine from N-acetyl-alpha-D-glucosamine 1-phosphate: step 1/1. Its pathway is bacterial outer membrane biogenesis; LPS lipid A biosynthesis. Functionally, catalyzes the last two sequential reactions in the de novo biosynthetic pathway for UDP-N-acetylglucosamine (UDP-GlcNAc). The C-terminal domain catalyzes the transfer of acetyl group from acetyl coenzyme A to glucosamine-1-phosphate (GlcN-1-P) to produce N-acetylglucosamine-1-phosphate (GlcNAc-1-P), which is converted into UDP-GlcNAc by the transfer of uridine 5-monophosphate (from uridine 5-triphosphate), a reaction catalyzed by the N-terminal domain. This chain is Bifunctional protein GlmU, found in Francisella tularensis subsp. tularensis (strain SCHU S4 / Schu 4).